The primary structure comprises 299 residues: N-acetylmuramic acid 6-phosphate etherase (299 aa).

Residues 54 to 217 (TIAQYKKGGR…STITMVGVGK (164 aa)) form the SIS domain. E82 (proton donor) is an active-site residue. E113 is a catalytic residue.

It belongs to the GCKR-like family. MurNAc-6-P etherase subfamily. As to quaternary structure, homodimer.

It catalyses the reaction N-acetyl-D-muramate 6-phosphate + H2O = N-acetyl-D-glucosamine 6-phosphate + (R)-lactate. It participates in amino-sugar metabolism; N-acetylmuramate degradation. Its function is as follows. Specifically catalyzes the cleavage of the D-lactyl ether substituent of MurNAc 6-phosphate, producing GlcNAc 6-phosphate and D-lactate. The protein is N-acetylmuramic acid 6-phosphate etherase of Staphylococcus aureus (strain bovine RF122 / ET3-1).